We begin with the raw amino-acid sequence, 706 residues long: Fatty acid oxidation complex subunit alpha (706 aa).

An enoyl-CoA hydratase region spans residues 1-188; sequence MEKTFNLTRR…KMGLVNDVVP (188 aa). The 3-hydroxyacyl-CoA dehydrogenase stretch occupies residues 308–706; the sequence is RKVKKAVILG…TMARENVSFF (399 aa).

It in the N-terminal section; belongs to the enoyl-CoA hydratase/isomerase family. This sequence in the central section; belongs to the 3-hydroxyacyl-CoA dehydrogenase family. As to quaternary structure, heterotetramer of two alpha chains (FadJ) and two beta chains (FadI).

The protein resides in the cytoplasm. The catalysed reaction is a (3S)-3-hydroxyacyl-CoA = a (2E)-enoyl-CoA + H2O. It carries out the reaction a 4-saturated-(3S)-3-hydroxyacyl-CoA = a (3E)-enoyl-CoA + H2O. It catalyses the reaction a (3S)-3-hydroxyacyl-CoA + NAD(+) = a 3-oxoacyl-CoA + NADH + H(+). The enzyme catalyses (3S)-3-hydroxybutanoyl-CoA = (3R)-3-hydroxybutanoyl-CoA. Its pathway is lipid metabolism; fatty acid beta-oxidation. Its function is as follows. Catalyzes the formation of a hydroxyacyl-CoA by addition of water on enoyl-CoA. Also exhibits 3-hydroxyacyl-CoA epimerase and 3-hydroxyacyl-CoA dehydrogenase activities. The polypeptide is Fatty acid oxidation complex subunit alpha (Shewanella putrefaciens (strain CN-32 / ATCC BAA-453)).